Here is a 510-residue protein sequence, read N- to C-terminus: 3,4-dihydroxyphenylacetaldehyde synthase (510 aa).

Asparagine 192 is an active-site residue. Lysine 303 carries the post-translational modification N6-(pyridoxal phosphate)lysine.

The protein belongs to the group II decarboxylase family. Requires pyridoxal 5'-phosphate as cofactor.

It catalyses the reaction L-dopa + O2 + H2O + H(+) = 3,4-dihydroxyphenylacetaldehyde + H2O2 + NH4(+) + CO2. Its function is as follows. Catalyzes the decarboxylation-oxidative deamination of L-3,4-dihydroxyphenylalanine (L-DOPA) to 3,4-dihydroxylphenylacetaldehyde (DHPAA). Involved in cuticle development. Probably responsible for the protein cross-linking during the development of flexible cuticles. This Drosophila melanogaster (Fruit fly) protein is 3,4-dihydroxyphenylacetaldehyde synthase (amd).